We begin with the raw amino-acid sequence, 428 residues long: Serine--tRNA ligase (428 aa).

An L-serine-binding site is contributed by 235–237 (TAE). 266 to 268 (RSE) serves as a coordination point for ATP. Glu289 is a binding site for L-serine. 353–356 (EISS) is an ATP binding site. Residue Ser389 participates in L-serine binding.

It belongs to the class-II aminoacyl-tRNA synthetase family. Type-1 seryl-tRNA synthetase subfamily. In terms of assembly, homodimer. The tRNA molecule binds across the dimer.

The protein localises to the cytoplasm. The enzyme catalyses tRNA(Ser) + L-serine + ATP = L-seryl-tRNA(Ser) + AMP + diphosphate + H(+). It catalyses the reaction tRNA(Sec) + L-serine + ATP = L-seryl-tRNA(Sec) + AMP + diphosphate + H(+). It participates in aminoacyl-tRNA biosynthesis; selenocysteinyl-tRNA(Sec) biosynthesis; L-seryl-tRNA(Sec) from L-serine and tRNA(Sec): step 1/1. Catalyzes the attachment of serine to tRNA(Ser). Is also able to aminoacylate tRNA(Sec) with serine, to form the misacylated tRNA L-seryl-tRNA(Sec), which will be further converted into selenocysteinyl-tRNA(Sec). The protein is Serine--tRNA ligase of Psychromonas ingrahamii (strain DSM 17664 / CCUG 51855 / 37).